Here is a 257-residue protein sequence, read N- to C-terminus: MKSVDHPVDVLPAEHSAETPGDARASESSLLISETFVSRQGEGELTGTESVFIRTSGCNLRCWFCDTPYASWKPEGTRQTIEDLLQLVAKSGVKHVVLTGGEPLIAKGIVSLIDQLRSAGNHVTIETAGTVDPGARCDLLSLSPKLRASTPDAKDHPRLAKMHAERRLPINTMKQLIQSAEATQVKFVVDSADELPEIDEVVRQLEIAADAVYLMPQGISVEQLDAARPWLEPMAISRGYQYCDRMQIRWFGNRRGT.

A disordered region spans residues 1 to 25; the sequence is MKSVDHPVDVLPAEHSAETPGDARA. Residues 39-41 and R54 contribute to the substrate site; that span reads RQG. The Radical SAM core domain occupies 45 to 244; the sequence is LTGTESVFIR…AISRGYQYCD (200 aa). Residues C58, C62, and C65 each coordinate [4Fe-4S] cluster. T67 provides a ligand contact to Mg(2+). T99 serves as a coordination point for substrate. Residues G101 and 143-145 each bind S-adenosyl-L-methionine; that span reads SPK.

The protein belongs to the radical SAM superfamily. 7-carboxy-7-deazaguanine synthase family. As to quaternary structure, homodimer. [4Fe-4S] cluster serves as cofactor. It depends on S-adenosyl-L-methionine as a cofactor. The cofactor is Mg(2+).

The catalysed reaction is 6-carboxy-5,6,7,8-tetrahydropterin + H(+) = 7-carboxy-7-deazaguanine + NH4(+). It functions in the pathway purine metabolism; 7-cyano-7-deazaguanine biosynthesis. In terms of biological role, catalyzes the complex heterocyclic radical-mediated conversion of 6-carboxy-5,6,7,8-tetrahydropterin (CPH4) to 7-carboxy-7-deazaguanine (CDG), a step common to the biosynthetic pathways of all 7-deazapurine-containing compounds. This Rhodopirellula baltica (strain DSM 10527 / NCIMB 13988 / SH1) protein is 7-carboxy-7-deazaguanine synthase.